The chain runs to 791 residues: Protein FAM47A (791 aa).

3 disordered regions span residues 195-257 (PVSH…TRRR), 274-409 (EDAR…TGVC), and 449-573 (VKKT…SEPP). Basic and acidic residues-rich tracts occupy residues 274–288 (EDARAPCEGREKTTD) and 333–342 (GESHLRLEHS). A compositionally biased stretch (polar residues) spans 349–358 (SLRSEPSETG). Residues 449–462 (VKKTKEPTEPHKSP) show a composition bias toward basic and acidic residues.

This sequence belongs to the FAM47 family.

This chain is Protein FAM47A (FAM47A), found in Homo sapiens (Human).